A 100-amino-acid chain; its full sequence is Urease subunit gamma (100 aa).

It belongs to the urease gamma subunit family. In terms of assembly, heterotrimer of UreA (gamma), UreB (beta) and UreC (alpha) subunits. Three heterotrimers associate to form the active enzyme.

It localises to the cytoplasm. It catalyses the reaction urea + 2 H2O + H(+) = hydrogencarbonate + 2 NH4(+). Its pathway is nitrogen metabolism; urea degradation; CO(2) and NH(3) from urea (urease route): step 1/1. This is Urease subunit gamma from Prochlorococcus marinus (strain MIT 9313).